We begin with the raw amino-acid sequence, 407 residues long: Argininosuccinate synthase (407 aa).

ATP-binding positions include alanine 16–serine 24 and alanine 44. The L-citrulline site is built by tyrosine 96 and serine 101. Glycine 126 serves as a coordination point for ATP. 3 residues coordinate L-aspartate: threonine 128, asparagine 132, and aspartate 133. Asparagine 132 is an L-citrulline binding site. 5 residues coordinate L-citrulline: arginine 136, serine 185, serine 194, glutamate 270, and tyrosine 282.

It belongs to the argininosuccinate synthase family. Type 1 subfamily. As to quaternary structure, homotetramer.

The protein localises to the cytoplasm. It carries out the reaction L-citrulline + L-aspartate + ATP = 2-(N(omega)-L-arginino)succinate + AMP + diphosphate + H(+). It functions in the pathway amino-acid biosynthesis; L-arginine biosynthesis; L-arginine from L-ornithine and carbamoyl phosphate: step 2/3. This Shewanella amazonensis (strain ATCC BAA-1098 / SB2B) protein is Argininosuccinate synthase.